The primary structure comprises 459 residues: MAKTKPPVNKNEIYTLTFEDLTHEGNGVAKIEGYPLFVPEVLPDEQAKVKVVKVNKNFGFGKLLELTKTSSHRVEPTCHVHCGGCQLQHMSYDLQLQMKQGQVHNVMKKVAHLDQVPVHPILGMEEPSHYRNKVQIPVGEKNGEVIVGFYQKRSHRILQNQDTCHIQDEAINEVLPFTRQLMNKYGIQAYDEKSHRGQLRHIMVRVGHYTKDIMIVFVTKTSKFPEKDRIIKELTEQFPQVKSIVQNVNDQRTNVVLGKKTKVLWGENYIYDKIGDLTFAISPKSFFQVNPVQTKVLYDKALEYANIDKDDVVIDAYCGIGSISLFLAQKAKKVYGIEVVPEAIEDAKMNAEINGMNNVEFSVGQAEKVMPKWKEQGLDPDVIVVDPPRKGCDVDFLEAMIAMKPKRIVYVSCNPSTLARDLRILEDGGFETKQVQPVDMFPSTNHVECVAELTLKLSN.

The region spanning 7-65 is the TRAM domain; that stretch reads PVNKNEIYTLTFEDLTHEGNGVAKIEGYPLFVPEVLPDEQAKVKVVKVNKNFGFGKLLE. Residues C78, C82, C85, and C164 each contribute to the [4Fe-4S] cluster site. S-adenosyl-L-methionine-binding residues include Q288, Y317, E338, and D386. The active-site Nucleophile is C413.

Belongs to the class I-like SAM-binding methyltransferase superfamily. RNA M5U methyltransferase family.

This is an uncharacterized protein from Oceanobacillus iheyensis (strain DSM 14371 / CIP 107618 / JCM 11309 / KCTC 3954 / HTE831).